The sequence spans 457 residues: Argininosuccinate lyase (457 aa).

This sequence belongs to the lyase 1 family. Argininosuccinate lyase subfamily.

The protein resides in the cytoplasm. The enzyme catalyses 2-(N(omega)-L-arginino)succinate = fumarate + L-arginine. Its pathway is amino-acid biosynthesis; L-arginine biosynthesis; L-arginine from L-ornithine and carbamoyl phosphate: step 3/3. This is Argininosuccinate lyase from Escherichia fergusonii (strain ATCC 35469 / DSM 13698 / CCUG 18766 / IAM 14443 / JCM 21226 / LMG 7866 / NBRC 102419 / NCTC 12128 / CDC 0568-73).